We begin with the raw amino-acid sequence, 527 residues long: MKSYLILNTLLLSLLKINGFSKSSWFSSKTSLIFDRINKLNDPQSSNSIHSRKYQYFQLKKFPNSTNVRCNDGSIPGYYTRPSTTNCSKKWLIFLEGGWYCFNNNTCESRRRTHYDLFSSEFWSSERQLGGILSNNERINPNFHDYNSVYIPYCSSDLWSGKQLEKTNGLYFHGSRILDTVVDDLTQNQHFKKVHEVAFVGSSAGGIGVLLNIDRLKRRLKKKLKRKVFIHGIVDSAWFLDYPAYRQSNCTHIYECPPENALRNGMKLWNPRIPRRCKKFQGRGREWKCFMGPVIYRHLKNPTFIIQSLFDDAQLQMSKVPILEGGSNKKFSYIQQLGGFAAQTLRQAKGVFAHSCVDHEILTKSNWAYVSVNNQRLHETLNYWQAYLEGEKKKIKKKVQKNPKLIKTGKSPCKNLRKPKFSGNIDQSKYQLIDSCHISQITSYKIQLPHNRTLSRCANAIPLIPLCNPTCSPLSHPISGLSMSFIDLLELYNVRINLIAKSLGISMEQLRKMNTQQQISLLYCSSR.

Residues 1–19 form the signal peptide; that stretch reads MKSYLILNTLLLSLLKING. 3 N-linked (GlcNAc...) asparagine glycosylation sites follow: N64, N86, and N104. S203 acts as the Charge relay system in catalysis. N-linked (GlcNAc...) asparagine glycosylation is present at N249. Catalysis depends on charge relay system residues D311 and H359. N451 is a glycosylation site (N-linked (GlcNAc...) asparagine).

This sequence belongs to the pectinacetylesterase family. Notum subfamily. As to expression, expressed in the anterior pole.

The protein resides in the secreted. It catalyses the reaction [Wnt protein]-O-(9Z)-hexadecenoyl-L-serine + H2O = [Wnt protein]-L-serine + (9Z)-hexadecenoate + H(+). Carboxylesterase that acts as a key negative regulator of the Wnt signaling pathway. Acts by specifically mediating depalmitoleoylation of WNT proteins. Serine palmitoleoylation of WNT proteins is required for efficient binding to frizzled receptors. Promotes head regeneration following amputation by inhibiting the Wnt signaling pathway. The protein is Palmitoleoyl-protein carboxylesterase NOTUM of Schmidtea mediterranea (Freshwater planarian flatworm).